Consider the following 206-residue polypeptide: Uridine kinase (206 aa).

11-18 (GGTGSGKS) provides a ligand contact to ATP.

This sequence belongs to the uridine kinase family.

It is found in the cytoplasm. The catalysed reaction is uridine + ATP = UMP + ADP + H(+). It carries out the reaction cytidine + ATP = CMP + ADP + H(+). It participates in pyrimidine metabolism; CTP biosynthesis via salvage pathway; CTP from cytidine: step 1/3. Its pathway is pyrimidine metabolism; UMP biosynthesis via salvage pathway; UMP from uridine: step 1/1. This chain is Uridine kinase, found in Clostridium botulinum (strain Okra / Type B1).